The primary structure comprises 79 residues: Schistosomin (79 aa).

Post-translationally, contains four disulfide bonds. In terms of tissue distribution, growth-controlling neurosecretory light green cells, in the cerebral ganglia of the CNS.

The protein localises to the secreted. Its function is as follows. Anti-gonadotropic neuropeptide. It also decreases the binding capacity of calfluxin to membrane-bound receptors of the albumen gland. This leads to inhibition of the reproductive activities of the infected snail. This is Schistosomin from Lymnaea stagnalis (Great pond snail).